The sequence spans 473 residues: Ribulose bisphosphate carboxylase large chain (473 aa).

2 residues coordinate substrate: asparagine 116 and threonine 166. The Proton acceptor role is filled by lysine 168. Lysine 170 is a substrate binding site. Residues lysine 194, aspartate 196, and glutamate 197 each coordinate Mg(2+). Position 194 is an N6-carboxylysine (lysine 194). Catalysis depends on histidine 287, which acts as the Proton acceptor. The substrate site is built by arginine 288, histidine 320, and serine 372.

The protein belongs to the RuBisCO large chain family. Type I subfamily. As to quaternary structure, heterohexadecamer of 8 large chains and 8 small chains. It depends on Mg(2+) as a cofactor.

The enzyme catalyses 2 (2R)-3-phosphoglycerate + 2 H(+) = D-ribulose 1,5-bisphosphate + CO2 + H2O. It carries out the reaction D-ribulose 1,5-bisphosphate + O2 = 2-phosphoglycolate + (2R)-3-phosphoglycerate + 2 H(+). RuBisCO catalyzes two reactions: the carboxylation of D-ribulose 1,5-bisphosphate, the primary event in carbon dioxide fixation, as well as the oxidative fragmentation of the pentose substrate. Both reactions occur simultaneously and in competition at the same active site. The sequence is that of Ribulose bisphosphate carboxylase large chain from Hydrogenophaga pseudoflava (Pseudomonas carboxydoflava).